A 97-amino-acid chain; its full sequence is DNA/RNA-binding protein Alba 1 (97 aa).

Ser2 carries the post-translational modification N-acetylserine; by ard1 acetylase. Lys16, Lys17, and Tyr22 together coordinate RNA. Lys16 is modified (N6,N6,N6-trimethyllysine; alternate). Residue Lys16 is modified to N6,N6-dimethyllysine; alternate. An N6-acetyllysine; alternate modification is found at Lys16. Lys16 is modified (N6-methyllysine; alternate). The residue at position 31 (Asn31) is a Deamidated asparagine; partial. At Gln32 the chain carries Deamidated glutamine; partial. Residue Lys40 is modified to N6-methyllysine; partial. Positions 42 and 44 each coordinate RNA. Residue Lys48 is modified to N6-acetyllysine; partial. Residue Asp51 is modified to Aspartate methyl ester; partial. Position 58 is a deamidated asparagine; partial (Asn58). Lys64 bears the N6-acetyllysine; alternate; partial mark. At Lys64 the chain carries N6-methyllysine; alternate; partial. Lys68 carries the post-translational modification N6-acetyllysine; partial. At Gln75 the chain carries N5-methylglutamine; partial. Asp81 is modified (aspartate methyl ester; partial). Lys97 bears the N6-methyllysine; partial mark.

This sequence belongs to the histone-like Alba family. Forms homodimers and higher order oligomers, e.g. homotetramers. In terms of processing, acetylated. Acetylation at Lys-16 by the Pat acetylase decreases DNA-binding affinity. Deacetylation at Lys-16 by the CobB deacetylase increases DNA-binding affinity. Acetylation at Ser-2 is involved in the regulation of the turnover of the protein.

It localises to the cytoplasm. Its subcellular location is the chromosome. Binds double-stranded DNA tightly but without sequence specificity. Involved in DNA compaction. Possesses DNA endonuclease activity. Prevents transcription after DNA binding. Binds single-stranded DNA and RNA in vitro. Binds rRNA and mRNA in vivo. May play a role in maintaining the structural and functional stability of RNA, and, perhaps, ribosomes. Binds double-stranded RNA (dsRNA) and exhibits RNA chaperone activity. Required for normal growth. This chain is DNA/RNA-binding protein Alba 1, found in Saccharolobus islandicus (strain REY15A) (Sulfolobus islandicus).